The sequence spans 159 residues: Protein-export protein SecB (159 aa).

It belongs to the SecB family. As to quaternary structure, homotetramer, a dimer of dimers. One homotetramer interacts with 1 SecA dimer.

The protein resides in the cytoplasm. Its function is as follows. One of the proteins required for the normal export of preproteins out of the cell cytoplasm. It is a molecular chaperone that binds to a subset of precursor proteins, maintaining them in a translocation-competent state. It also specifically binds to its receptor SecA. In Nitrobacter hamburgensis (strain DSM 10229 / NCIMB 13809 / X14), this protein is Protein-export protein SecB.